The primary structure comprises 771 residues: DNA polymerase 1 (771 aa).

This sequence belongs to the DNA polymerase type-B family.

It catalyses the reaction DNA(n) + a 2'-deoxyribonucleoside 5'-triphosphate = DNA(n+1) + diphosphate. This is DNA polymerase 1 (polI) from Pyrococcus abyssi.